A 290-amino-acid chain; its full sequence is Release factor glutamine methyltransferase (290 aa).

Asp-140 and Asn-181 together coordinate S-adenosyl-L-methionine. Residue 181 to 184 participates in substrate binding; sequence NPPY.

It belongs to the protein N5-glutamine methyltransferase family. PrmC subfamily.

It catalyses the reaction L-glutaminyl-[peptide chain release factor] + S-adenosyl-L-methionine = N(5)-methyl-L-glutaminyl-[peptide chain release factor] + S-adenosyl-L-homocysteine + H(+). Methylates the class 1 translation termination release factors RF1/PrfA and RF2/PrfB on the glutamine residue of the universally conserved GGQ motif. The protein is Release factor glutamine methyltransferase of Chlamydia trachomatis serovar D (strain ATCC VR-885 / DSM 19411 / UW-3/Cx).